The chain runs to 90 residues: DNA-directed RNA polymerase subunit omega (90 aa).

The protein belongs to the RNA polymerase subunit omega family. In terms of assembly, the RNAP catalytic core consists of 2 alpha, 1 beta, 1 beta' and 1 omega subunit. When a sigma factor is associated with the core the holoenzyme is formed, which can initiate transcription.

The catalysed reaction is RNA(n) + a ribonucleoside 5'-triphosphate = RNA(n+1) + diphosphate. Its function is as follows. Promotes RNA polymerase assembly. Latches the N- and C-terminal regions of the beta' subunit thereby facilitating its interaction with the beta and alpha subunits. The protein is DNA-directed RNA polymerase subunit omega of Hamiltonella defensa subsp. Acyrthosiphon pisum (strain 5AT).